Here is a 652-residue protein sequence, read N- to C-terminus: MENRMNELVSLLNQYAKEYYTQDNPTVSDSQYDQLYRELVELEEQHPENILPNSPTHRVGGLVLEGFEKYQHEYPLYSLQDAFSKEELIAFDKRVKAEFPTASYMAELKIDGLSVSLTYVNGILQVGATRGDGNIGENITENLKRVHDIPLHLDQSLDITVRGECYLPKESFEAINIEKRANGEQEFANPRNAAAGTLRQLNTGIVAKRKLATFLYQEASPTQKETQDDVLKELESYGFSVNHHRLISSSMEKIWDFIQTIEKDRISLPYDIDGIVIKVNSLAMQEELGFTVKAPRWAIAYKFPAEEKEAEILSVDWTVGRTGVVTPTANLTPVQLAGTTVSRATLHNVDYIAEKDIRIGDTVVVYKAGDIIPAVLNVVMSKRNQQEVMLIPKLCPSCGSELVHFEDEVALRCINPLCPNQIKERLAHFASRDAMNITGFGPSLVEKLFDAHLIADVADIYRLSIEDLLTLDGIKEKSATKIYHAIQSSKENSAEKLLFGLGIRHVGSKASRLLLEEFGNLRQLSQASQESIASIDGLGGVIAKSLHTFFEKEEVDKLLEELTSYNVNFNYLGKRVSTDAQLSGLTVVLTGKLEKMTRNEAKEKLQNLGAKVTGSVSKKTDLIVAGSDAGSKLTKAQDLGITIQDEDWLLNL.

NAD(+) contacts are provided by residues 29–33 (DSQYD), 78–79 (SL), and Glu-107. Catalysis depends on Lys-109, which acts as the N6-AMP-lysine intermediate. Positions 130, 164, 278, and 302 each coordinate NAD(+). 4 residues coordinate Zn(2+): Cys-395, Cys-398, Cys-413, and Cys-418. Residues 577-652 (STDAQLSGLT…IQDEDWLLNL (76 aa)) form the BRCT domain.

The protein belongs to the NAD-dependent DNA ligase family. LigA subfamily. Requires Mg(2+) as cofactor. Mn(2+) serves as cofactor.

It catalyses the reaction NAD(+) + (deoxyribonucleotide)n-3'-hydroxyl + 5'-phospho-(deoxyribonucleotide)m = (deoxyribonucleotide)n+m + AMP + beta-nicotinamide D-nucleotide.. Its function is as follows. DNA ligase that catalyzes the formation of phosphodiester linkages between 5'-phosphoryl and 3'-hydroxyl groups in double-stranded DNA using NAD as a coenzyme and as the energy source for the reaction. It is essential for DNA replication and repair of damaged DNA. The polypeptide is DNA ligase (Streptococcus agalactiae serotype III (strain NEM316)).